The primary structure comprises 261 residues: MTVVTMKQLLEAGVHFGHQTRRWDPKMAPYIFTQRNGIYIIDLQKTIRMLDDAYNYVKAVAQDGGVFLFVGTKKQAQDAVKEEATRAGQYYVNQRWLGGTLTNWTTIQSRVKRLKQLKEMSEDGTFDVLPKKEVALLTKEMEKLERFLGGIEDMPRIPDVMFVVDPKKEKIAVHEANILGIPVVAMVDTNTDPDPIDVVIPANDDAIRAIRLISGAMADAIIEGKQGQDDSEDVEKEMADKAAAENDDEESIEEVVEKSED.

Positions 224–261 (GKQGQDDSEDVEKEMADKAAAENDDEESIEEVVEKSED) are disordered. Residues 245–254 (ENDDEESIEE) show a composition bias toward acidic residues.

The protein belongs to the universal ribosomal protein uS2 family.

This is Small ribosomal subunit protein uS2 from Lactobacillus gasseri (strain ATCC 33323 / DSM 20243 / BCRC 14619 / CIP 102991 / JCM 1131 / KCTC 3163 / NCIMB 11718 / NCTC 13722 / AM63).